The sequence spans 129 residues: Glycine cleavage system H protein (129 aa).

The 83-residue stretch at 24–106 (SYTVGISEHA…FGDGWFFRVM (83 aa)) folds into the Lipoyl-binding domain. K65 carries the N6-lipoyllysine modification.

It belongs to the GcvH family. In terms of assembly, the glycine cleavage system is composed of four proteins: P, T, L and H. (R)-lipoate is required as a cofactor.

Its function is as follows. The glycine cleavage system catalyzes the degradation of glycine. The H protein shuttles the methylamine group of glycine from the P protein to the T protein. This Shewanella halifaxensis (strain HAW-EB4) protein is Glycine cleavage system H protein.